Here is a 193-residue protein sequence, read N- to C-terminus: Ribonuclease HII (193 aa).

The RNase H type-2 domain occupies 3–192 (SLVAGIDEVG…VRAVIDRSSA (190 aa)). A divalent metal cation-binding residues include Asp9, Glu10, and Asp101.

It belongs to the RNase HII family. It depends on Mn(2+) as a cofactor. Mg(2+) is required as a cofactor.

The protein resides in the cytoplasm. The enzyme catalyses Endonucleolytic cleavage to 5'-phosphomonoester.. In terms of biological role, endonuclease that specifically degrades the RNA of RNA-DNA hybrids. The sequence is that of Ribonuclease HII from Methylococcus capsulatus (strain ATCC 33009 / NCIMB 11132 / Bath).